Reading from the N-terminus, the 159-residue chain is MQGDPEVLRLLNEQLTSELTAINQYFLHSKMQDNWGFTELAEHTRAESFDEMRHAEAITDRILLLDGLPNYQRLFSLRIGQTLREQFEADLAIEYEVMDRLKPAIILCREKQDSTTATLFEQIVADEEKHIDYLETQLELMDKLGVELYSAQCVSRPPS.

Residues methionine 1 to glycine 145 enclose the Ferritin-like diiron domain. Residues glutamate 18 and glutamate 51 each coordinate Fe cation. Methionine 52 contacts heme b. 4 residues coordinate Fe cation: histidine 54, glutamate 94, glutamate 127, and histidine 130.

It belongs to the bacterioferritin family. Homooligomer of 24 subunits, arranged as 12 dimers, that are packed together to form an approximately spherical molecule with a central cavity, in which large amounts of iron can be deposited. Heme b is required as a cofactor.

It carries out the reaction 4 Fe(2+) + O2 + 4 H(+) = 4 Fe(3+) + 2 H2O. The catalysed reaction is Fe(2+)(in) = Fe(2+)(out). Iron-storage protein, whose ferroxidase center binds Fe(2+), oxidizes it using dioxygen to Fe(3+), and participates in the subsequent Fe(3+) oxide mineral core formation within the central cavity of the BFR protein shell. The polypeptide is Bacterioferritin (bfr) (Mycolicibacterium paratuberculosis (strain ATCC BAA-968 / K-10) (Mycobacterium paratuberculosis)).